Reading from the N-terminus, the 224-residue chain is Ribonuclease HII (224 aa).

Residues Met1 to Arg210 enclose the RNase H type-2 domain. Asp7, Glu8, and Asp105 together coordinate a divalent metal cation.

This sequence belongs to the RNase HII family. It depends on Mn(2+) as a cofactor. Requires Mg(2+) as cofactor.

The protein resides in the cytoplasm. It catalyses the reaction Endonucleolytic cleavage to 5'-phosphomonoester.. Its function is as follows. Endonuclease that specifically degrades the RNA of RNA-DNA hybrids. The sequence is that of Ribonuclease HII (rnhB) from Pyrococcus abyssi (strain GE5 / Orsay).